A 429-amino-acid polypeptide reads, in one-letter code: Adenylosuccinate synthetase (429 aa).

Residues 12–18 (GDEGKGK) and 40–42 (GHT) each bind GTP. D13 (proton acceptor) is an active-site residue. Mg(2+) is bound by residues D13 and G40. IMP-binding positions include 13-16 (DEGK), 38-41 (NAGH), T129, R143, Q223, T238, and R302. H41 functions as the Proton donor in the catalytic mechanism. 298–304 (VVTGRKR) provides a ligand contact to substrate. Residues R304, 330-332 (KLD), and 412-414 (STS) contribute to the GTP site.

This sequence belongs to the adenylosuccinate synthetase family. As to quaternary structure, homodimer. It depends on Mg(2+) as a cofactor.

The protein resides in the cytoplasm. The catalysed reaction is IMP + L-aspartate + GTP = N(6)-(1,2-dicarboxyethyl)-AMP + GDP + phosphate + 2 H(+). It functions in the pathway purine metabolism; AMP biosynthesis via de novo pathway; AMP from IMP: step 1/2. Functionally, plays an important role in the de novo pathway of purine nucleotide biosynthesis. Catalyzes the first committed step in the biosynthesis of AMP from IMP. This chain is Adenylosuccinate synthetase, found in Brucella suis (strain ATCC 23445 / NCTC 10510).